Reading from the N-terminus, the 46-residue chain is MMQFILGFTLGNVVGMYLAQNYEVPNISKKIEAFKKDVEAKKKPPE.

A helical membrane pass occupies residues 7–23 (GFTLGNVVGMYLAQNYE).

Belongs to the STMP1 family. Widely expressed. Expressed more abundantly in brain compared with other tissues such as heart, muscle and liver.

It localises to the mitochondrion inner membrane. Its subcellular location is the mitochondrion outer membrane. It is found in the mitochondrion intermembrane space. Microprotein involved in mitochondrial respiratory chain complex III (ubiquinol-cytochrome c oxidoreductase) and complex IV (mitochondrial cytochrome c oxidase complex) assembly. Required for the formation of mitochondrial supercomplexes (SCs). Also required for the activation of the NLRP3 inflammasome. This Danio rerio (Zebrafish) protein is Short transmembrane mitochondrial protein 1.